Here is a 307-residue protein sequence, read N- to C-terminus: MSTSKLVEIPEPLAASYARAFGEEGQAWIAALPALVEELLDRWELTADGASASGEASLVLPVLRTDGTRAVLKLQLPREETSAAITGLRTWNGHGVVRLLDHDPRSSTMLLERLDASRTLASVEDDDAAMGVLAGLLARLVSVPAPRGLRGLGDIAGAMLEEVPRAVAALADPADRRLLNDWASAVAELVGEPGDRMLHWDLHYGNVLAAEREPWLAIDPEPLAGDPGFDLWPALDSRWDDIVAQRDVVRVVRRRFDLLTEVLGLDRARAAGWTYGRLLQNALWDIEDGSAALDPAAVTLAQALRGH.

Position 133–145 (133–145) interacts with streptomycin; sequence LAGLLARLVSVPA. The active-site Proton acceptor is D201.

Belongs to the aminoglycoside phosphotransferase family.

The catalysed reaction is streptomycin + ATP = streptomycin 6-phosphate + ADP + H(+). The aminoglycoside phosphotransferases achieve inactivation of their antibiotic substrates by phosphorylation. In Streptomyces glaucescens, this protein is Streptomycin 6-kinase (sph).